We begin with the raw amino-acid sequence, 119 residues long: Large ribosomal subunit protein uL22 (119 aa).

It belongs to the universal ribosomal protein uL22 family. Part of the 50S ribosomal subunit.

In terms of biological role, this protein binds specifically to 23S rRNA; its binding is stimulated by other ribosomal proteins, e.g. L4, L17, and L20. It is important during the early stages of 50S assembly. It makes multiple contacts with different domains of the 23S rRNA in the assembled 50S subunit and ribosome. Its function is as follows. The globular domain of the protein is located near the polypeptide exit tunnel on the outside of the subunit, while an extended beta-hairpin is found that lines the wall of the exit tunnel in the center of the 70S ribosome. The polypeptide is Large ribosomal subunit protein uL22 (Microcystis aeruginosa (strain NIES-843 / IAM M-2473)).